Here is a 690-residue protein sequence, read N- to C-terminus: Protein arginine N-methyltransferase 7 (690 aa).

2 consecutive SAM-dependent MTase PRMT-type domains span residues 14 to 357 and 366 to 690; these read QNSW…YSLW and TKSV…QKKL.

The protein belongs to the class I-like SAM-binding methyltransferase superfamily. Protein arginine N-methyltransferase family. PRMT7 subfamily.

In terms of biological role, essential arginine methyltransferase that can both catalyze the formation of omega-N monomethylarginine (MMA) and symmetrical dimethylarginine (sDMA). Specifically mediates the symmetrical dimethylation of arginine residues in the small nuclear ribonucleoproteins SmD1 and SmD3. The protein is Protein arginine N-methyltransferase 7 (Art7) of Drosophila yakuba (Fruit fly).